A 361-amino-acid polypeptide reads, in one-letter code: Probable dual-specificity RNA methyltransferase RlmN (361 aa).

Glutamate 91 functions as the Proton acceptor in the catalytic mechanism. The Radical SAM core domain maps to 97-329; sequence QHYGLSVCVT…KKKGGNCVVR (233 aa). Residues cysteine 104 and cysteine 340 are joined by a disulfide bond. 3 residues coordinate [4Fe-4S] cluster: cysteine 111, cysteine 115, and cysteine 118. Residues 163–164, serine 195, 218–220, and asparagine 296 each bind S-adenosyl-L-methionine; these read GE and SLH. The active-site S-methylcysteine intermediate is the cysteine 340.

This sequence belongs to the radical SAM superfamily. RlmN family. The cofactor is [4Fe-4S] cluster.

It is found in the cytoplasm. It catalyses the reaction adenosine(2503) in 23S rRNA + 2 reduced [2Fe-2S]-[ferredoxin] + 2 S-adenosyl-L-methionine = 2-methyladenosine(2503) in 23S rRNA + 5'-deoxyadenosine + L-methionine + 2 oxidized [2Fe-2S]-[ferredoxin] + S-adenosyl-L-homocysteine. The enzyme catalyses adenosine(37) in tRNA + 2 reduced [2Fe-2S]-[ferredoxin] + 2 S-adenosyl-L-methionine = 2-methyladenosine(37) in tRNA + 5'-deoxyadenosine + L-methionine + 2 oxidized [2Fe-2S]-[ferredoxin] + S-adenosyl-L-homocysteine. Functionally, specifically methylates position 2 of adenine 2503 in 23S rRNA and position 2 of adenine 37 in tRNAs. The chain is Probable dual-specificity RNA methyltransferase RlmN from Streptococcus pneumoniae (strain P1031).